The primary structure comprises 478 residues: MATSCEDVSPVKSPAVTPLKIRELINEGIVTGERSSIGRKETAVVPEENNGFEDPLSNSSYESTSKDAFFGRVESFSSLKWAGKPSELCPLICAKYGWSNIECDMLKCSSCNAYLCASLQPVLDFSKYKQRCVELQEALRKAHEKFCFWPDSPCPDYFWALMVTEPSSVLSDFVGRFDNLCHLEIQLPSIKHEDLKNMDITEETVSHLLRLIEDELKSKDGREDNSRLASDSLQVHISACILALCGWSTSYTSGSLCIINCPRCMRKVGLWAFQQLEAVELDNSLSAPNTPVSPAEGHERSPFGIMSPNRRVTRSRDAEQSPALAYGRTRSSDLLSPADSEAVRSRPVTRSMGQGESSGLSNELHSSPLRRSKRPRLCSSSSSDTSPRGCFDPLSQHRSWCPWVNVCQASETSTLGSEIQEEASRKEYGWKEVLNVLLAEENSRTLSDPDTSSVPEKSHKVFRIFRQWQMAASASENP.

Residues 93-147 (CAKYGWSNIECDMLKCSSCNAYLCASLQPVLDFSKYKQRCVELQEALRKAHEKFC) form a C3HC-type zinc finger. Residues 285–389 (LSAPNTPVSP…SSSSDTSPRG (105 aa)) are disordered. Residues 351–363 (SMGQGESSGLSNE) show a composition bias toward polar residues. Over residues 377–388 (LCSSSSSDTSPR) the composition is skewed to low complexity.

Phosphorylated. May also be weakly phosphorylated on Tyr residues.

Its subcellular location is the nucleus. The protein resides in the nucleus envelope. Required for proper positioning of a substantial amount of TPR at the nuclear basket (NB) through interaction with TPR. The polypeptide is Zinc finger C3HC-type protein 1-like (zc3hc1) (Xenopus tropicalis (Western clawed frog)).